A 750-amino-acid polypeptide reads, in one-letter code: Photosystem I P700 chlorophyll a apoprotein A1 (750 aa).

Transmembrane regions (helical) follow at residues 70–93 (VFSA…FHGA), 156–179 (LYCT…FHYH), 195–219 (LNHH…HVSL), 291–309 (IAHH…GHMY), 346–369 (WHAQ…HHMY), 385–411 (LSLF…IFMV), 433–455 (AIIS…LYIH), and 531–549 (FLVH…LILL). [4Fe-4S] cluster-binding residues include cysteine 573 and cysteine 582. 2 helical membrane-spanning segments follow: residues 589 to 610 (HVFL…HFSW) and 664 to 686 (LSAY…MFLF). Histidine 675 serves as a coordination point for chlorophyll a'. Methionine 683 and tyrosine 691 together coordinate chlorophyll a. Tryptophan 692 lines the phylloquinone pocket. The chain crosses the membrane as a helical span at residues 724-744 (AVGVTHYLLGGIATTWAFFLA).

Belongs to the PsaA/PsaB family. The PsaA/B heterodimer binds the P700 chlorophyll special pair and subsequent electron acceptors. PSI consists of a core antenna complex that captures photons, and an electron transfer chain that converts photonic excitation into a charge separation. The eukaryotic PSI reaction center is composed of at least 11 subunits. The cofactor is P700 is a chlorophyll a/chlorophyll a' dimer, A0 is one or more chlorophyll a, A1 is one or both phylloquinones and FX is a shared 4Fe-4S iron-sulfur center..

It is found in the plastid. It localises to the chloroplast thylakoid membrane. It catalyses the reaction reduced [plastocyanin] + hnu + oxidized [2Fe-2S]-[ferredoxin] = oxidized [plastocyanin] + reduced [2Fe-2S]-[ferredoxin]. PsaA and PsaB bind P700, the primary electron donor of photosystem I (PSI), as well as the electron acceptors A0, A1 and FX. PSI is a plastocyanin-ferredoxin oxidoreductase, converting photonic excitation into a charge separation, which transfers an electron from the donor P700 chlorophyll pair to the spectroscopically characterized acceptors A0, A1, FX, FA and FB in turn. Oxidized P700 is reduced on the lumenal side of the thylakoid membrane by plastocyanin. The sequence is that of Photosystem I P700 chlorophyll a apoprotein A1 from Saccharum hybrid (Sugarcane).